A 98-amino-acid chain; its full sequence is NADH-ubiquinone oxidoreductase chain 4L (98 aa).

A run of 3 helical transmembrane segments spans residues 1–21 (MTLI…GLLM), 29–49 (ALLC…LTIL), and 61–81 (IILL…LVMV).

It belongs to the complex I subunit 4L family. As to quaternary structure, core subunit of respiratory chain NADH dehydrogenase (Complex I) which is composed of 45 different subunits.

It localises to the mitochondrion inner membrane. It catalyses the reaction a ubiquinone + NADH + 5 H(+)(in) = a ubiquinol + NAD(+) + 4 H(+)(out). Functionally, core subunit of the mitochondrial membrane respiratory chain NADH dehydrogenase (Complex I) which catalyzes electron transfer from NADH through the respiratory chain, using ubiquinone as an electron acceptor. Part of the enzyme membrane arm which is embedded in the lipid bilayer and involved in proton translocation. The sequence is that of NADH-ubiquinone oxidoreductase chain 4L (MT-ND4L) from Balaenoptera physalus (Fin whale).